The primary structure comprises 158 residues: SsrA-binding protein (158 aa).

The protein belongs to the SmpB family.

It is found in the cytoplasm. Required for rescue of stalled ribosomes mediated by trans-translation. Binds to transfer-messenger RNA (tmRNA), required for stable association of tmRNA with ribosomes. tmRNA and SmpB together mimic tRNA shape, replacing the anticodon stem-loop with SmpB. tmRNA is encoded by the ssrA gene; the 2 termini fold to resemble tRNA(Ala) and it encodes a 'tag peptide', a short internal open reading frame. During trans-translation Ala-aminoacylated tmRNA acts like a tRNA, entering the A-site of stalled ribosomes, displacing the stalled mRNA. The ribosome then switches to translate the ORF on the tmRNA; the nascent peptide is terminated with the 'tag peptide' encoded by the tmRNA and targeted for degradation. The ribosome is freed to recommence translation, which seems to be the essential function of trans-translation. This chain is SsrA-binding protein, found in Bartonella henselae (strain ATCC 49882 / DSM 28221 / CCUG 30454 / Houston 1) (Rochalimaea henselae).